A 199-amino-acid polypeptide reads, in one-letter code: Transgelin-3 (199 aa).

Residues 24–136 (ADLENKLVDW…RTLMALGSVA (113 aa)) enclose the Calponin-homology (CH) domain. At S163 the chain carries Phosphoserine. Residues 174–199 (IGLQMGSNKGASQAGMTGYGMPRQIM) form a Calponin-like repeat. Over residues 176-188 (LQMGSNKGASQAG) the composition is skewed to polar residues. A disordered region spans residues 176 to 199 (LQMGSNKGASQAGMTGYGMPRQIM).

Belongs to the calponin family.

In Pongo abelii (Sumatran orangutan), this protein is Transgelin-3 (TAGLN3).